The sequence spans 358 residues: NADH-quinone oxidoreductase subunit H (358 aa).

The next 8 membrane-spanning stretches (helical) occupy residues 30–50 (IVIGVCIMLAYAVIAIIMIFM), 96–116 (FLYNLAPYIVILASIMAFSCL), 129–149 (VGIFFLLAASSIGVVGILLAG), 165–185 (GAQMISYELSVGLSILTIVIL), 201–221 (GWFLFKGHIPALIAFIIYLIA), 264–284 (LFIIAAVATTIFLGGWMPLHI), 297–317 (IPGFIWFFGKSFFVVWLLMWI), and 336–356 (YLVPIGLCNLLLMVIIVVFKL).

The protein belongs to the complex I subunit 1 family. NDH-1 is composed of 14 different subunits. Subunits NuoA, H, J, K, L, M, N constitute the membrane sector of the complex.

It is found in the cell inner membrane. The catalysed reaction is a quinone + NADH + 5 H(+)(in) = a quinol + NAD(+) + 4 H(+)(out). In terms of biological role, NDH-1 shuttles electrons from NADH, via FMN and iron-sulfur (Fe-S) centers, to quinones in the respiratory chain. The immediate electron acceptor for the enzyme in this species is believed to be ubiquinone. Couples the redox reaction to proton translocation (for every two electrons transferred, four hydrogen ions are translocated across the cytoplasmic membrane), and thus conserves the redox energy in a proton gradient. This subunit may bind ubiquinone. The polypeptide is NADH-quinone oxidoreductase subunit H (Phocaeicola vulgatus (strain ATCC 8482 / DSM 1447 / JCM 5826 / CCUG 4940 / NBRC 14291 / NCTC 11154) (Bacteroides vulgatus)).